Reading from the N-terminus, the 1114-residue chain is Mediator of RNA polymerase II transcription subunit 14 (1114 aa).

Disordered regions lie at residues 1–27, 40–79, and 120–141; these read MPGV…QDGL, ANAQ…GPPE, and HGIH…SPGN. Polar residues predominate over residues 126-140; the sequence is TAPTTGKSPGNQSPG.

It belongs to the Mediator complex subunit 14 family. Component of the Mediator complex.

The protein localises to the nucleus. Its function is as follows. Component of the Mediator complex, a coactivator involved in the regulated transcription of nearly all RNA polymerase II-dependent genes. Mediator functions as a bridge to convey information from gene-specific regulatory proteins to the basal RNA polymerase II transcription machinery. Mediator is recruited to promoters by direct interactions with regulatory proteins and serves as a scaffold for the assembly of a functional preinitiation complex with RNA polymerase II and the general transcription factors. This chain is Mediator of RNA polymerase II transcription subunit 14 (rgr1), found in Aspergillus niger (strain ATCC MYA-4892 / CBS 513.88 / FGSC A1513).